The chain runs to 303 residues: ATP synthase gamma chain (303 aa).

Belongs to the ATPase gamma chain family. In terms of assembly, F-type ATPases have 2 components, CF(1) - the catalytic core - and CF(0) - the membrane proton channel. CF(1) has five subunits: alpha(3), beta(3), gamma(1), delta(1), epsilon(1). CF(0) has three main subunits: a, b and c.

The protein localises to the cell membrane. In terms of biological role, produces ATP from ADP in the presence of a proton gradient across the membrane. The gamma chain is believed to be important in regulating ATPase activity and the flow of protons through the CF(0) complex. In Oenococcus oeni (strain ATCC BAA-331 / PSU-1), this protein is ATP synthase gamma chain.